Consider the following 198-residue polypeptide: Recombination protein RecR (198 aa).

The C4-type zinc finger occupies 58-73 (CSVCGNFTDKDPCAIC). Residues 81 to 175 (NTICVVEHPK…KVTRIAHGIP (95 aa)) enclose the Toprim domain.

The protein belongs to the RecR family.

Its function is as follows. May play a role in DNA repair. It seems to be involved in an RecBC-independent recombinational process of DNA repair. It may act with RecF and RecO. This Clostridium tetani (strain Massachusetts / E88) protein is Recombination protein RecR.